We begin with the raw amino-acid sequence, 405 residues long: Glucose-1-phosphate adenylyltransferase (405 aa).

Residues Tyr96, Gly161, 176-177 (EK), and Ser194 each bind alpha-D-glucose 1-phosphate.

The protein belongs to the bacterial/plant glucose-1-phosphate adenylyltransferase family. Homotetramer.

The enzyme catalyses alpha-D-glucose 1-phosphate + ATP + H(+) = ADP-alpha-D-glucose + diphosphate. Its pathway is glycan biosynthesis; glycogen biosynthesis. Involved in the biosynthesis of ADP-glucose, a building block required for the elongation reactions to produce glycogen. Catalyzes the reaction between ATP and alpha-D-glucose 1-phosphate (G1P) to produce pyrophosphate and ADP-Glc. In Aliivibrio fischeri (strain ATCC 700601 / ES114) (Vibrio fischeri), this protein is Glucose-1-phosphate adenylyltransferase.